Consider the following 332-residue polypeptide: MKEYDIIIVGGGPIGLFATFYSGLRDMSALLIDAQDELGGQLVTIYPEKMVYDVGGYPGILAYDLAQNLIEQAKMFSPDIRLKEWVDWITRTQDNLWVIKTDKGNEFKAKTILLALGIGRITPSRLGAGGEIEYENRGVYYTVKRKKDFEEKRILIVGGGDSAVDWAINLAPVAKSITLIHRRDQFRAHESSVKQLYNIASVHTWHELKEVKGDGSKVTQAVIFDNRTKEEKTLDVDAVIISIGHKGDLGNVPRWGLNMKGRDILVNAKMETNLPGVYAAGDIASQEGVPKMALIAIGFSEAAIATSMAKKYIDPNVSIFGGHSSEIMKSRS.

Positions 33, 41, 46, 86, 121, 282, and 325 each coordinate FAD.

The protein belongs to the ferredoxin--NADP reductase type 2 family. As to quaternary structure, homodimer. FAD is required as a cofactor.

The catalysed reaction is 2 reduced [2Fe-2S]-[ferredoxin] + NADP(+) + H(+) = 2 oxidized [2Fe-2S]-[ferredoxin] + NADPH. The sequence is that of Ferredoxin--NADP reductase 2 from Sulfolobus acidocaldarius (strain ATCC 33909 / DSM 639 / JCM 8929 / NBRC 15157 / NCIMB 11770).